The following is a 299-amino-acid chain: Acetylglutamate kinase (299 aa).

Substrate is bound by residues 70-71, Arg92, and Asn197; that span reads GG.

It belongs to the acetylglutamate kinase family. ArgB subfamily.

The protein resides in the cytoplasm. It catalyses the reaction N-acetyl-L-glutamate + ATP = N-acetyl-L-glutamyl 5-phosphate + ADP. It participates in amino-acid biosynthesis; L-arginine biosynthesis; N(2)-acetyl-L-ornithine from L-glutamate: step 2/4. Its function is as follows. Catalyzes the ATP-dependent phosphorylation of N-acetyl-L-glutamate. This Acidiphilium cryptum (strain JF-5) protein is Acetylglutamate kinase.